Reading from the N-terminus, the 317-residue chain is GTPase Era (317 aa).

Positions 23 to 190 (RSGFVALIGP…MDYLVETLPE (168 aa)) constitute an Era-type G domain. A G1 region spans residues 31-38 (GPTNAGKS). A GTP-binding site is contributed by 31-38 (GPTNAGKS). Positions 57–61 (QTTRA) are G2. The segment at 78–81 (DTPG) is G3. Residues 78-82 (DTPGI) and 140-143 (NKID) each bind GTP. Positions 140–143 (NKID) are G4. The G5 stretch occupies residues 169-171 (ISA). The region spanning 221 to 298 (LHQELPYASH…HLFLFVKVRE (78 aa)) is the KH type-2 domain.

Belongs to the TRAFAC class TrmE-Era-EngA-EngB-Septin-like GTPase superfamily. Era GTPase family. As to quaternary structure, monomer.

The protein resides in the cytoplasm. It is found in the cell inner membrane. Functionally, an essential GTPase that binds both GDP and GTP, with rapid nucleotide exchange. Plays a role in 16S rRNA processing and 30S ribosomal subunit biogenesis and possibly also in cell cycle regulation and energy metabolism. This Agrobacterium fabrum (strain C58 / ATCC 33970) (Agrobacterium tumefaciens (strain C58)) protein is GTPase Era.